Reading from the N-terminus, the 145-residue chain is Large ribosomal subunit protein uL15 (145 aa).

Positions 1–57 (MKLNDLSPAPGSRREKHRPGRGIGSGLGKTGGRGHKGQTSRSGGTIAPGFEGGQQPL) are disordered. Gly residues predominate over residues 21–31 (RGIGSGLGKTG).

Belongs to the universal ribosomal protein uL15 family. In terms of assembly, part of the 50S ribosomal subunit.

In terms of biological role, binds to the 23S rRNA. This is Large ribosomal subunit protein uL15 from Pseudomonas fluorescens (strain SBW25).